A 422-amino-acid polypeptide reads, in one-letter code: Telomerase-associated protein of 50 kDa (422 aa).

As to quaternary structure, component of the telomerase holoenzyme complex, composed of the catalytic core (the catalytic subunit TERT, the telomerase RNA template component TER and TAP65/p65), which is associated with two heterotrimeric subcomplexes: (i) the replication protein A (RPA)-related subcomplex, composed of TEB1, RPA2/TEB2 and RPA3/TEB3 and (ii) the CST-like subcomplex, composed of TAP75/p75, TAP45/p45 and TAP19/p19. TEB1 and the CST-like subcomplex are tethered to the catalytic core by TAP50/p50.

It is found in the chromosome. Its subcellular location is the telomere. In terms of biological role, tethering component of the holoenzyme telomerase ribonucleoprotein (RNP) complex. Telomerase is an essential ribonucleoprotein enzyme that copies new telomeric repeats onto chromosome ends by repetitively synthesizing the short telomere-repeat sequence 5'-TTGGGG-3' using an RNA template component TER. In the telomerase holoenzyme complex, acts as a hub that anchors the two heterotrimeric subcomplexes with the catalytic core. The chain is Telomerase-associated protein of 50 kDa from Tetrahymena thermophila (strain SB210).